An 89-amino-acid polypeptide reads, in one-letter code: Probable Fe(2+)-trafficking protein (89 aa).

This sequence belongs to the Fe(2+)-trafficking protein family.

Functionally, could be a mediator in iron transactions between iron acquisition and iron-requiring processes, such as synthesis and/or repair of Fe-S clusters in biosynthetic enzymes. In Hahella chejuensis (strain KCTC 2396), this protein is Probable Fe(2+)-trafficking protein.